We begin with the raw amino-acid sequence, 223 residues long: Deoxyribose-phosphate aldolase (223 aa).

D89 (proton donor/acceptor) is an active-site residue. The active-site Schiff-base intermediate with acetaldehyde is the K152. The active-site Proton donor/acceptor is the K181.

Belongs to the DeoC/FbaB aldolase family. DeoC type 1 subfamily.

It localises to the cytoplasm. It catalyses the reaction 2-deoxy-D-ribose 5-phosphate = D-glyceraldehyde 3-phosphate + acetaldehyde. Its pathway is carbohydrate degradation; 2-deoxy-D-ribose 1-phosphate degradation; D-glyceraldehyde 3-phosphate and acetaldehyde from 2-deoxy-alpha-D-ribose 1-phosphate: step 2/2. In terms of biological role, catalyzes a reversible aldol reaction between acetaldehyde and D-glyceraldehyde 3-phosphate to generate 2-deoxy-D-ribose 5-phosphate. The protein is Deoxyribose-phosphate aldolase of Bacillus subtilis (strain 168).